Reading from the N-terminus, the 399-residue chain is Phosphoglycerate kinase (399 aa).

Substrate-binding positions include 20-22 (DFN), Arg35, 58-61 (HLGR), Arg117, and Arg154. ATP-binding positions include Lys204, Gly295, Glu326, and 355 to 358 (GGDS).

Belongs to the phosphoglycerate kinase family. Monomer.

It localises to the cytoplasm. The enzyme catalyses (2R)-3-phosphoglycerate + ATP = (2R)-3-phospho-glyceroyl phosphate + ADP. The protein operates within carbohydrate degradation; glycolysis; pyruvate from D-glyceraldehyde 3-phosphate: step 2/5. This Beutenbergia cavernae (strain ATCC BAA-8 / DSM 12333 / CCUG 43141 / JCM 11478 / NBRC 16432 / NCIMB 13614 / HKI 0122) protein is Phosphoglycerate kinase.